The primary structure comprises 246 residues: NAD-dependent protein deacetylase (246 aa).

One can recognise a Deacetylase sirtuin-type domain in the interval 1–246; that stretch reads MKKPDIQQLK…VIEEIVNSNS (246 aa). Positions 25, 36, 37, 106, 108, 109, and 124 each coordinate NAD(+). Phe-36 is a binding site for nicotinamide. Ile-108 and Asp-109 together coordinate nicotinamide. His-124 serves as the catalytic Proton acceptor. Zn(2+)-binding residues include Cys-132, Cys-135, Cys-152, and Cys-155. Positions 193, 194, 216, and 233 each coordinate NAD(+).

The protein belongs to the sirtuin family. Class U subfamily. Zn(2+) serves as cofactor.

Its subcellular location is the cytoplasm. It catalyses the reaction N(6)-acetyl-L-lysyl-[protein] + NAD(+) + H2O = 2''-O-acetyl-ADP-D-ribose + nicotinamide + L-lysyl-[protein]. In terms of biological role, NAD-dependent protein deacetylase which modulates the activities of several enzymes which are inactive in their acetylated form. The protein is NAD-dependent protein deacetylase of Staphylococcus epidermidis (strain ATCC 35984 / DSM 28319 / BCRC 17069 / CCUG 31568 / BM 3577 / RP62A).